The sequence spans 242 residues: Lactate utilization protein A 2 (242 aa).

This sequence belongs to the LutA/YkgE family.

In terms of biological role, is involved in L-lactate degradation and allows cells to grow with lactate as the sole carbon source. The polypeptide is Lactate utilization protein A 2 (Bacillus cereus (strain AH820)).